The sequence spans 192 residues: Adapter protein MecA (192 aa).

Belongs to the MecA family. In terms of assembly, homodimer.

In terms of biological role, enables the recognition and targeting of unfolded and aggregated proteins to the ClpC protease or to other proteins involved in proteolysis. Acts negatively in the development of competence by binding ComK and recruiting it to the ClpCP protease. When overexpressed, inhibits sporulation. Also involved in Spx degradation by ClpC. This Oceanobacillus iheyensis (strain DSM 14371 / CIP 107618 / JCM 11309 / KCTC 3954 / HTE831) protein is Adapter protein MecA.